A 143-amino-acid chain; its full sequence is Small ribosomal subunit protein uS9 (143 aa).

The disordered stretch occupies residues 118-143 (DSRRTEPHKPNRSTKGPRAKRQKSYR). A compositionally biased stretch (basic residues) spans 127 to 143 (PNRSTKGPRAKRQKSYR).

Belongs to the universal ribosomal protein uS9 family.

This chain is Small ribosomal subunit protein uS9, found in Thermococcus sibiricus (strain DSM 12597 / MM 739).